Reading from the N-terminus, the 450-residue chain is Phosphoglucosamine mutase (450 aa).

Ser-101 acts as the Phosphoserine intermediate in catalysis. Positions 101, 242, 244, and 246 each coordinate Mg(2+). Ser-101 is modified (phosphoserine).

It belongs to the phosphohexose mutase family. Requires Mg(2+) as cofactor. In terms of processing, activated by phosphorylation.

It catalyses the reaction alpha-D-glucosamine 1-phosphate = D-glucosamine 6-phosphate. Its function is as follows. Catalyzes the conversion of glucosamine-6-phosphate to glucosamine-1-phosphate. The sequence is that of Phosphoglucosamine mutase from Rhodopseudomonas palustris (strain BisB5).